The primary structure comprises 440 residues: Xylose isomerase (440 aa).

Catalysis depends on residues histidine 101 and aspartate 104. Mg(2+) is bound by residues glutamate 232, glutamate 268, histidine 271, aspartate 296, aspartate 307, aspartate 309, and aspartate 339.

Belongs to the xylose isomerase family. Homotetramer. Mg(2+) serves as cofactor.

The protein resides in the cytoplasm. It catalyses the reaction alpha-D-xylose = alpha-D-xylulofuranose. The protein is Xylose isomerase of Escherichia coli (strain SMS-3-5 / SECEC).